A 419-amino-acid chain; its full sequence is Inward rectifier potassium channel 16 (419 aa).

Residues 1 to 67 (MSYYGSSYRI…MVDIFTTLVD (67 aa)) are Cytoplasmic-facing. Residues 68–94 (TKWRHMFVIFSLSYILSWLIFGSIFWL) traverse the membrane as a helical segment. At 95 to 117 (IAFHHGDLLSDPDITPCVDNVHS) the chain is on the extracellular side. Residues 118–134 (FTAAFLFSLETQTTIGY) constitute an intramembrane region (helical; Pore-forming). Positions 131–136 (TIGYGY) match the Selectivity filter motif. At 135 to 143 (GYRCVTEEC) the chain is on the extracellular side. A helical transmembrane segment spans residues 144–171 (SVAVLTVILQSILSCIINTFIIGAALAK). Residues 172-419 (MATARKRAQT…LNRISMESQM (248 aa)) lie on the Cytoplasmic side of the membrane. A phosphoserine mark is found at Ser358, Ser374, and Ser376.

The protein belongs to the inward rectifier-type potassium channel (TC 1.A.2.1) family. KCNJ16 subfamily. It forms heteromeric channels with Kir4.1/KCNJ10; this interaction is required for KCNJ16 localization to the basolateral membrane in kidney cells. As a heteromer with KCNJ10, may interact with MAGI1; this interaction may facilitate KCNJ10/KCNJ16 potassium channel expression at the basolateral membrane in kidney cells. May form heteromers with Kir2.1/KCNJ2. Can form heteromeric channels with Kir4.2/KCNJ15. In terms of tissue distribution, abundantly expressed in the proximal and distal segments of the nephron.

Its subcellular location is the membrane. The protein resides in the basolateral cell membrane. It catalyses the reaction K(+)(in) = K(+)(out). Its activity is regulated as follows. Channel activity is strongly regulated by variations of cytosolic pH; channels are activated by alkaline and inhibited by acidic pH values. Activated by phosphatidylinositol 4,5 biphosphate (PtdIns(4,5)P2). Functionally, inward rectifier potassium channels are characterized by a greater tendency to allow potassium to flow into the cell rather than out of it. Their voltage dependence is regulated by the concentration of extracellular potassium; as external potassium is raised, the voltage range of the channel opening shifts to more positive voltages. The inward rectification is mainly due to the blockage of outward current by internal magnesium. KCNJ16 may be involved in the regulation of fluid and pH balance. In the kidney, together with KCNJ10, mediates basolateral K(+) recycling in distal tubules; this process is critical for Na(+) reabsorption at the tubules. This chain is Inward rectifier potassium channel 16 (Kcnj16), found in Mus musculus (Mouse).